The primary structure comprises 420 residues: Vasopressin V1a receptor (420 aa).

The disordered stretch occupies residues methionine 1–valine 45. At methionine 1–glutamate 54 the chain is on the extracellular side. N-linked (GlcNAc...) asparagine glycosylation occurs at asparagine 27. Basic and acidic residues predominate over residues alanine 32 to valine 45. A helical membrane pass occupies residues isoleucine 55–alanine 75. Over leucine 76 to histidine 92 the chain is Cytoplasmic. Residues leucine 93–isoleucine 113 form a helical membrane-spanning segment. The Extracellular segment spans residues threonine 114–arginine 125. A disulfide bridge connects residues cysteine 124 and cysteine 205. The chain crosses the membrane as a helical span at residues valine 126 to threonine 146. At alanine 147–arginine 168 the chain is on the cytoplasmic side. Residues leucine 169–phenylalanine 189 form a helical membrane-spanning segment. At serine 190–glycine 225 the chain is on the extracellular side. Asparagine 198 is a glycosylation site (N-linked (GlcNAc...) asparagine). Residues valine 226–tryptophan 246 form a helical membrane-spanning segment. At arginine 247–methionine 294 the chain is on the cytoplasmic side. Residues threonine 295–tryptophan 315 form a helical membrane-spanning segment. The Extracellular segment spans residues serine 316–serine 331. Residues isoleucine 332–phenylalanine 352 traverse the membrane as a helical segment. Residues phenylalanine 353–threonine 420 lie on the Cytoplasmic side of the membrane. 2 S-palmitoyl cysteine lipidation sites follow: cysteine 367 and cysteine 368. Residues aspartate 379–arginine 411 are disordered. The span at arginine 385 to tryptophan 403 shows a compositional bias: polar residues. Serine 406 is modified (phosphoserine).

The protein belongs to the G-protein coupled receptor 1 family. Vasopressin/oxytocin receptor subfamily.

It localises to the cell membrane. In terms of biological role, receptor for arginine vasopressin. The activity of this receptor is mediated by G proteins which activate a phosphatidyl-inositol-calcium second messenger system. Involved in social memory formation. This Microtus montanus (Montane vole) protein is Vasopressin V1a receptor (Avpr1a).